Consider the following 299-residue polypeptide: Ribosomal protein L11 methyltransferase (299 aa).

Thr139, Gly163, Asp185, and Asn232 together coordinate S-adenosyl-L-methionine.

This sequence belongs to the methyltransferase superfamily. PrmA family.

Its subcellular location is the cytoplasm. It catalyses the reaction L-lysyl-[protein] + 3 S-adenosyl-L-methionine = N(6),N(6),N(6)-trimethyl-L-lysyl-[protein] + 3 S-adenosyl-L-homocysteine + 3 H(+). Functionally, methylates ribosomal protein L11. This is Ribosomal protein L11 methyltransferase from Crocosphaera subtropica (strain ATCC 51142 / BH68) (Cyanothece sp. (strain ATCC 51142)).